The following is a 217-amino-acid chain: Large ribosomal subunit protein uL3 (217 aa).

It belongs to the universal ribosomal protein uL3 family. In terms of assembly, part of the 50S ribosomal subunit. Forms a cluster with proteins L14 and L19.

In terms of biological role, one of the primary rRNA binding proteins, it binds directly near the 3'-end of the 23S rRNA, where it nucleates assembly of the 50S subunit. The chain is Large ribosomal subunit protein uL3 from Brachyspira hyodysenteriae (strain ATCC 49526 / WA1).